We begin with the raw amino-acid sequence, 382 residues long: Lysophosphatidylserine lipase ABHD12 (382 aa).

Residues 1-12 are compositionally biased toward basic and acidic residues; that stretch reads MRKRKGSADHDS. Positions 1-45 are disordered; it reads MRKRKGSADHDSSFTATLTDGSSDLKQCHKGTDADTDPGGSGKEM. Residues 1–60 lie on the Cytoplasmic side of the membrane; sequence MRKRKGSADHDSSFTATLTDGSSDLKQCHKGTDADTDPGGSGKEMGRRCRRGGLMWRLRR. Polar residues predominate over residues 13–25; it reads SFTATLTDGSSDL. A helical membrane pass occupies residues 61–81; the sequence is ILIWLLGIYIAIPVIIKVCPS. Residues 82 to 382 lie on the Extracellular side of the membrane; the sequence is IQAKLVFLNF…DFLRAPHPHG (301 aa). An N-linked (GlcNAc...) asparagine glycan is attached at Asn109. Residue Ser232 is the Nucleophile of the active site. Catalysis depends on charge relay system residues Asp319 and His358.

It belongs to the serine esterase family. Ubiquitously expressed in adult tissues.

It is found in the endoplasmic reticulum membrane. The enzyme catalyses 1-(9Z-octadecenoyl)-sn-glycero-3-phospho-L-serine + H2O = sn-glycero-3-phospho-L-serine + (9Z)-octadecenoate + H(+). It carries out the reaction 1-(9Z-octadecenoyl)-sn-glycero-3-phospho-(1'-sn-glycerol) + H2O = sn-glycero-3-phospho-(1'-sn-glycerol) + (9Z)-octadecenoate + H(+). It catalyses the reaction 1-(9Z-octadecenoyl)-sn-glycero-3-phospho-(1D-myo-inositol) + H2O = sn-glycero-3-phospho-1D-myo-inositol + (9Z)-octadecenoate + H(+). The catalysed reaction is 1-(9Z-octadecenoyl)-sn-glycero-3-phosphoethanolamine + H2O = sn-glycero-3-phosphoethanolamine + (9Z)-octadecenoate + H(+). The enzyme catalyses 1-(9Z-octadecenoyl)-sn-glycero-3-phosphocholine + H2O = 1-(9Z-octadecenoyl)-sn-glycerol + phosphocholine + H(+). It carries out the reaction 2-(9Z-octadecenoyl)-glycerol + H2O = glycerol + (9Z)-octadecenoate + H(+). It catalyses the reaction 1-hexadecanoyl-sn-glycero-3-phospho-L-serine + H2O = sn-glycero-3-phospho-L-serine + hexadecanoate + H(+). The catalysed reaction is 2-(5Z,8Z,11Z,14Z-eicosatetraenoyl)-glycerol + H2O = glycerol + (5Z,8Z,11Z,14Z)-eicosatetraenoate + H(+). The enzyme catalyses Hydrolyzes glycerol monoesters of long-chain fatty acids.. It carries out the reaction 1-decanoylglycerol + H2O = decanoate + glycerol + H(+). It catalyses the reaction 1-dodecanoylglycerol + H2O = dodecanoate + glycerol + H(+). The catalysed reaction is 1-tetradecanoylglycerol + H2O = tetradecanoate + glycerol + H(+). The enzyme catalyses 2-hexadecanoylglycerol + H2O = glycerol + hexadecanoate + H(+). It carries out the reaction 1-(9Z-octadecenoyl)-glycerol + H2O = glycerol + (9Z)-octadecenoate + H(+). It catalyses the reaction 2-(9Z,12Z-octadecadienoyl)-glycerol + H2O = (9Z,12Z)-octadecadienoate + glycerol + H(+). The catalysed reaction is 1-(5Z,8Z,11Z,14Z-eicosatetraenoyl)-glycerol + H2O = glycerol + (5Z,8Z,11Z,14Z)-eicosatetraenoate + H(+). The enzyme catalyses 1-(9Z,12Z-octadecadienoyl)-glycerol + H2O = (9Z,12Z)-octadecadienoate + glycerol + H(+). It carries out the reaction 1-hexadecanoylglycerol + H2O = glycerol + hexadecanoate + H(+). It catalyses the reaction 1-octadecanoylglycerol + H2O = octadecanoate + glycerol + H(+). The catalysed reaction is 1-octadecanoyl-2-(9,10-epoxyoctadecanoyl)-sn-glycero-3-phospho-L-serine + H2O = 9,10-epoxyoctadecanoate + 1-octadecanoyl-sn-glycero-3-phosphoserine + H(+). The enzyme catalyses 1-octadecanoyl-2-(10-hydroxyoctadecanoyl)-sn-glycero-3-phospho-L-serine + H2O = 1-octadecanoyl-sn-glycero-3-phosphoserine + 10-hydroxyoctadecanoate + H(+). It carries out the reaction 1-hexadecanoyl-2-(10-hydroxyoctadecanoyl)-sn-glycero-3-phospho-L-serine + H2O = 10-hydroxyoctadecanoate + 1-hexadecanoyl-sn-glycero-3-phospho-L-serine + H(+). Lysophosphatidylserine (LPS) lipase that mediates the hydrolysis of lysophosphatidylserine, a class of signaling lipids that regulates immunological and neurological processes. Represents a major lysophosphatidylserine lipase in the brain, thereby playing a key role in the central nervous system. Also able to hydrolyze oxidized phosphatidylserine; oxidized phosphatidylserine is produced in response to severe inflammatory stress and constitutes a proapoptotic 'eat me' signal. Also has monoacylglycerol (MAG) lipase activity: hydrolyzes 2-arachidonoylglycerol (2-AG), thereby acting as a regulator of endocannabinoid signaling pathways. Has a strong preference for very-long-chain lipid substrates; substrate specificity is likely due to improved catalysis and not improved substrate binding. This chain is Lysophosphatidylserine lipase ABHD12, found in Danio rerio (Zebrafish).